Here is a 1914-residue protein sequence, read N- to C-terminus: Fatty acid synthase beta subunit stcK (1914 aa).

An acetyltransferase (AT) domain region spans residues 17–395 (LYACFGGQGP…LEGTGMNVVN (379 aa)). The enoyl reductase (ER) domain stretch occupies residues 446–692 (TRLLGTPHVM…LIVEAPGVKD (247 aa)). Positions 1009–1509 (GECAWGYAAL…RANDRLRMEI (501 aa)) are dehydratase (DH) domain. Residues 1398–1532 (FLNRHGAPRV…VRVLKESTGE (135 aa)) enclose the MaoC-like domain. The malonyl/palmitoyl transferase (MT/PT) domain stretch occupies residues 1548–1900 (YVFTGQGTQE…IRLVQGVTQS (353 aa)).

Belongs to the fungal fatty acid synthetase subunit beta family. In terms of assembly, [Alpha(6)beta(6)] hexamers of two multifunctional subunits (alpha and beta).

It carries out the reaction acetyl-CoA + n malonyl-CoA + 2n NADPH + 4n H(+) = a long-chain-acyl-CoA + n CoA + n CO2 + 2n NADP(+).. It catalyses the reaction holo-[ACP] + acetyl-CoA = acetyl-[ACP] + CoA. The catalysed reaction is holo-[ACP] + malonyl-CoA = malonyl-[ACP] + CoA. The enzyme catalyses a (3R)-hydroxyacyl-[ACP] = a (2E)-enoyl-[ACP] + H2O. It carries out the reaction a 2,3-saturated acyl-[ACP] + NAD(+) = a (2E)-enoyl-[ACP] + NADH + H(+). It catalyses the reaction (9Z)-octadecenoyl-[ACP] + H2O = (9Z)-octadecenoate + holo-[ACP] + H(+). It participates in mycotoxin biosynthesis; sterigmatocystin biosynthesis. Fatty acid synthase beta subunit; part of the gene cluster that mediates the biosynthesis of sterigmatocystin (ST), a polyketide-derived furanocoumarin which is part of the most toxic and carcinogenic compounds among the known mycotoxins. The first step in the biosynthesis of sterigmatocystin is the production of hexanoate by the fatty acid synthase (FAS) units stcJ and stcK. The polyketide backbone is assembled by the non-reducing polyketide synthase stcA by condensation of the starter hexanoyl-CoA and 7 malonyl-CoA extender units followed by cyclization and release of norsolorinic acid. Norsolorinic acid is the first stable intermediate in the biosynthesis of sterigmatocystin and is converted into averantin (AVN) by the ketoreductase stcE which reduces the hexanoate ketone to an alcohol. Averantin is then oxidized into 5'-hydroxyaverantin (HAVN) by the cytochrome P450 monooxygenase stcF. 5'-hydroxyaverantin is further converted to 5'-oxyaverantin (OAVN) by the 5'-hydroxyaverantin dehydrogenase stcG. The next step is the conversion of OAVN into averufin (AVF) which is catalyzed by a yet to be identified enzyme. The cytochrome P450 monooxygenase stcB and the flavin-binding monooxygenase stcW are both required for the conversion of averufin to 1-hydroxyversicolorone. The esterase stcI probably catalyzes the formation of versiconal hemiacetal acetate from 1-hydroxyversicolorone. The oxydoreductase stcN then probably catalyzes the biosynthetic step from versiconal to versicolorin B (VERB). The next step is performed by the versicolorin B desaturase stcL to produce versicolorin A (VERA). The ketoreductase stcU and the cytochrome P450 monooxygenase stcS are involved in the conversion of versicolorin A to demethylsterigmatocystin. The Baeyer-Villiger oxidas stcQ and the reductase stcR might be involved in the biosynthetic step from versicolorin A to demethylsterigmatocystin. The final step in the biosynthesis of sterigmatocystin is the methylation of demethylsterigmatocystin catalyzed by the methyltransferase stcP. This chain is Fatty acid synthase beta subunit stcK, found in Emericella nidulans (strain FGSC A4 / ATCC 38163 / CBS 112.46 / NRRL 194 / M139) (Aspergillus nidulans).